The chain runs to 157 residues: 2-C-methyl-D-erythritol 2,4-cyclodiphosphate synthase (157 aa).

A divalent metal cation is bound by residues Asp8 and His10. 4-CDP-2-C-methyl-D-erythritol 2-phosphate is bound by residues 8-10 and 34-35; these read DVH and HS. His42 contacts a divalent metal cation. Residues 56 to 58, 61 to 65, 132 to 135, and Phe139 contribute to the 4-CDP-2-C-methyl-D-erythritol 2-phosphate site; these read DIG, FPDTD, and TTEE.

The protein belongs to the IspF family. In terms of assembly, homotrimer. A divalent metal cation is required as a cofactor.

The enzyme catalyses 4-CDP-2-C-methyl-D-erythritol 2-phosphate = 2-C-methyl-D-erythritol 2,4-cyclic diphosphate + CMP. It functions in the pathway isoprenoid biosynthesis; isopentenyl diphosphate biosynthesis via DXP pathway; isopentenyl diphosphate from 1-deoxy-D-xylulose 5-phosphate: step 4/6. Involved in the biosynthesis of isopentenyl diphosphate (IPP) and dimethylallyl diphosphate (DMAPP), two major building blocks of isoprenoid compounds. Catalyzes the conversion of 4-diphosphocytidyl-2-C-methyl-D-erythritol 2-phosphate (CDP-ME2P) to 2-C-methyl-D-erythritol 2,4-cyclodiphosphate (ME-CPP) with a corresponding release of cytidine 5-monophosphate (CMP). The polypeptide is 2-C-methyl-D-erythritol 2,4-cyclodiphosphate synthase (Clostridium botulinum (strain Eklund 17B / Type B)).